The sequence spans 239 residues: Pyridoxine 5'-phosphate synthase (239 aa).

N9 provides a ligand contact to 3-amino-2-oxopropyl phosphate. 11 to 12 (DH) provides a ligand contact to 1-deoxy-D-xylulose 5-phosphate. R20 is a binding site for 3-amino-2-oxopropyl phosphate. H45 acts as the Proton acceptor in catalysis. Residues R47 and H52 each coordinate 1-deoxy-D-xylulose 5-phosphate. Catalysis depends on E72, which acts as the Proton acceptor. Position 102 (T102) interacts with 1-deoxy-D-xylulose 5-phosphate. H189 functions as the Proton donor in the catalytic mechanism. 3-amino-2-oxopropyl phosphate is bound by residues G190 and 211–212 (GH).

The protein belongs to the PNP synthase family. In terms of assembly, homooctamer; tetramer of dimers.

The protein resides in the cytoplasm. The catalysed reaction is 3-amino-2-oxopropyl phosphate + 1-deoxy-D-xylulose 5-phosphate = pyridoxine 5'-phosphate + phosphate + 2 H2O + H(+). It participates in cofactor biosynthesis; pyridoxine 5'-phosphate biosynthesis; pyridoxine 5'-phosphate from D-erythrose 4-phosphate: step 5/5. Functionally, catalyzes the complicated ring closure reaction between the two acyclic compounds 1-deoxy-D-xylulose-5-phosphate (DXP) and 3-amino-2-oxopropyl phosphate (1-amino-acetone-3-phosphate or AAP) to form pyridoxine 5'-phosphate (PNP) and inorganic phosphate. The protein is Pyridoxine 5'-phosphate synthase of Ehrlichia chaffeensis (strain ATCC CRL-10679 / Arkansas).